A 726-amino-acid polypeptide reads, in one-letter code: Catalase-peroxidase (726 aa).

Positions 91–214 form a cross-link, tryptophyl-tyrosyl-methioninium (Trp-Tyr) (with M-240); the sequence is WHAAGTYRIG…LAAVQMGLIY (124 aa). Histidine 92 (proton acceptor) is an active-site residue. The tryptophyl-tyrosyl-methioninium (Tyr-Met) (with W-91) cross-link spans 214-240; sequence YVNPEGPNGNPDPVAAAIDIRETFRRM. Histidine 255 provides a ligand contact to heme b. Residues 335 to 362 form a disordered region; it reads AHQWKPKGNAGAGTVPDPADPSKRRSPS.

Belongs to the peroxidase family. Peroxidase/catalase subfamily. In terms of assembly, homodimer or homotetramer. Requires heme b as cofactor. In terms of processing, formation of the three residue Trp-Tyr-Met cross-link is important for the catalase, but not the peroxidase activity of the enzyme.

It catalyses the reaction H2O2 + AH2 = A + 2 H2O. The enzyme catalyses 2 H2O2 = O2 + 2 H2O. Its function is as follows. Bifunctional enzyme with both catalase and broad-spectrum peroxidase activity. This Cupriavidus metallidurans (strain ATCC 43123 / DSM 2839 / NBRC 102507 / CH34) (Ralstonia metallidurans) protein is Catalase-peroxidase.